The following is a 375-amino-acid chain: Serpin B5 (375 aa).

N-linked (GlcNAc...) asparagine glycans are attached at residues N133, N298, and N361.

It belongs to the serpin family. Ov-serpin subfamily. In terms of assembly, interacts with IRF6.

The protein localises to the secreted. It localises to the extracellular space. Tumor suppressor. It blocks the growth, invasion, and metastatic properties of mammary tumors. As it does not undergo the S (stressed) to R (relaxed) conformational transition characteristic of active serpins, it exhibits no serine protease inhibitory activity. The sequence is that of Serpin B5 (Serpinb5) from Mus musculus (Mouse).